A 101-amino-acid chain; its full sequence is Large ribosomal subunit protein uL24 (101 aa).

The protein belongs to the universal ribosomal protein uL24 family. In terms of assembly, part of the 50S ribosomal subunit.

In terms of biological role, one of two assembly initiator proteins, it binds directly to the 5'-end of the 23S rRNA, where it nucleates assembly of the 50S subunit. Its function is as follows. One of the proteins that surrounds the polypeptide exit tunnel on the outside of the subunit. The sequence is that of Large ribosomal subunit protein uL24 from Streptococcus suis (strain 98HAH33).